Reading from the N-terminus, the 251-residue chain is Probable phosphatase Sputw3181_2734 (251 aa).

Zn(2+) is bound by residues histidine 8, histidine 10, histidine 16, histidine 41, glutamate 74, histidine 102, histidine 132, aspartate 193, and histidine 195.

It belongs to the PHP family. The cofactor is Zn(2+).

The polypeptide is Probable phosphatase Sputw3181_2734 (Shewanella sp. (strain W3-18-1)).